The chain runs to 352 residues: Guanine nucleotide-binding protein alpha-7 subunit (352 aa).

G2 carries the N-myristoyl glycine lipid modification. C4 carries S-palmitoyl cysteine lipidation. A G-alpha domain is found at 32–352 (RIIKLLLLGA…AKNLKSMGLC (321 aa)). Positions 35-48 (KLLLLGAGESGKST) are G1 motif. GTP contacts are provided by residues 40-47 (GAGESGKS), 174-180 (LRTRIKT), 199-203 (DVGGQ), 268-271 (NKKD), and A324. 2 residues coordinate Mg(2+): S47 and T180. The interval 172-180 (DLLRTRIKT) is G2 motif. The interval 195–204 (FRVIDVGGQR) is G3 motif. Residues 264–271 (ILFLNKKD) form a G4 motif region. The tract at residues 322–327 (TCATDT) is G5 motif.

Belongs to the G-alpha family. G(i/o/t/z) subfamily. In terms of assembly, g proteins are composed of 3 units; alpha, beta and gamma. The alpha chain contains the guanine nucleotide binding site.

Functionally, guanine nucleotide-binding proteins (G proteins) are involved as modulators or transducers in various transmembrane signaling systems. In Caenorhabditis briggsae, this protein is Guanine nucleotide-binding protein alpha-7 subunit (gpa-7).